The chain runs to 423 residues: UDP-N-acetylglucosamine 1-carboxyvinyltransferase 2 (423 aa).

Phosphoenolpyruvate is bound at residue 23-24; it reads KN. R95 contributes to the UDP-N-acetyl-alpha-D-glucosamine binding site. C119 functions as the Proton donor in the catalytic mechanism. C119 bears the 2-(S-cysteinyl)pyruvic acid O-phosphothioketal mark. Positions 306 and 328 each coordinate UDP-N-acetyl-alpha-D-glucosamine.

The protein belongs to the EPSP synthase family. MurA subfamily.

The protein localises to the cytoplasm. It catalyses the reaction phosphoenolpyruvate + UDP-N-acetyl-alpha-D-glucosamine = UDP-N-acetyl-3-O-(1-carboxyvinyl)-alpha-D-glucosamine + phosphate. The protein operates within cell wall biogenesis; peptidoglycan biosynthesis. Its function is as follows. Cell wall formation. Adds enolpyruvyl to UDP-N-acetylglucosamine. In Symbiobacterium thermophilum (strain DSM 24528 / JCM 14929 / IAM 14863 / T), this protein is UDP-N-acetylglucosamine 1-carboxyvinyltransferase 2.